We begin with the raw amino-acid sequence, 31 residues long: Photosystem II reaction center protein T (31 aa).

Residues 3–23 (SFAYILILTLAIATLFFAIAF) form a helical membrane-spanning segment.

The protein belongs to the PsbT family. PSII is composed of 1 copy each of membrane proteins PsbA, PsbB, PsbC, PsbD, PsbE, PsbF, PsbH, PsbI, PsbJ, PsbK, PsbL, PsbM, PsbT, PsbX, PsbY, PsbZ, Psb30/Ycf12, peripheral proteins PsbO, CyanoQ (PsbQ), PsbU, PsbV and a large number of cofactors. It forms dimeric complexes.

Its subcellular location is the cellular thylakoid membrane. Functionally, found at the monomer-monomer interface of the photosystem II (PS II) dimer, plays a role in assembly and dimerization of PSII. PSII is a light-driven water plastoquinone oxidoreductase, using light energy to abstract electrons from H(2)O, generating a proton gradient subsequently used for ATP formation. The polypeptide is Photosystem II reaction center protein T (Synechococcus sp. (strain WH7803)).